The primary structure comprises 676 residues: Envelope glycoprotein (676 aa).

Residues 1–32 form the signal peptide; sequence MGVTGILQLPRDRFKRTSFFLWVIILFQRTFS. The Extracellular portion of the chain corresponds to 33–650; that stretch reads IPLGVIHNST…NDNWWTGWRQ (618 aa). Asparagine 40 carries N-linked (GlcNAc...) asparagine; by host glycosylation. Disulfide bonds link cysteine 53/cysteine 609, cysteine 108/cysteine 135, cysteine 121/cysteine 147, cysteine 511/cysteine 556, and cysteine 601/cysteine 608. The interval 54 to 201 is receptor-binding; that stretch reads RDKLSSTNQL…DFFSSHPLRE (148 aa). N-linked (GlcNAc...) asparagine; by host glycosylation is found at asparagine 204, asparagine 228, asparagine 238, asparagine 257, asparagine 268, asparagine 296, asparagine 317, asparagine 333, asparagine 346, asparagine 386, and asparagine 413. The segment at 305 to 485 is mucin-like region; it reads ELSFTVVSNG…SGKLGLITNT (181 aa). The segment covering 315-335 has biased composition (polar residues); it reads AKNISGQSPARTSSDPGTNTT. The segment at 315-337 is disordered; that stretch reads AKNISGQSPARTSSDPGTNTTTE. Positions 373 to 391 are enriched in polar residues; the sequence is TSPQSLTTKPGPDNSTHNT. Disordered stretches follow at residues 373-392 and 402-479; these read TSPQ…HNTP and TQVE…SGKL. The segment covering 414-432 has biased composition (low complexity); that stretch reads DSTASDTPSATTAAGPPKA. Polar residues predominate over residues 433-464; that stretch reads ENTNTSKSTDFLDPATTTSPQNHSETAGNNNT. Asparagine 436, asparagine 454, and asparagine 462 each carry an N-linked (GlcNAc...) asparagine; by host glycan. The tract at residues 524–539 is fusion peptide; the sequence is GAAIGLAWIPYFGPAA. A coiled-coil region spans residues 554-595; that stretch reads LICGLRQLANETTQALQLFLRATTELRTFSILNRKAIDFLLQ. Residue asparagine 563 is glycosylated (N-linked (GlcNAc...) asparagine; by host). Residues 615–634 adopt a coiled-coil conformation; it reads WTKNITDKIDQIIHDFVDKT. The N-linked (GlcNAc...) asparagine; by host glycan is linked to asparagine 618. Residues 651 to 671 form a helical membrane-spanning segment; the sequence is WIPAGIGVTGVIIAVIALFCI. The short motif at 660–664 is the Important role for host BST2/tetherin antagonism element; that stretch reads GVIIA. Residues cysteine 670 and cysteine 672 are each lipidated (S-palmitoyl cysteine; by host). The Cytoplasmic portion of the chain corresponds to 672 to 676; that stretch reads CKFVF.

It belongs to the filoviruses glycoprotein family. As to quaternary structure, homotrimer; each monomer consists of a GP1 and a GP2 subunit linked by disulfide bonds. The resulting peplomers (GP1,2) protrude from the virus surface as spikes. Interacts with host integrin alpha-V/ITGAV. Interacts with host CLEC10A. Also binds to host CD209 and CLEC4M/DC-SIGN(R). Interacts with host FOLR1. Interacts with BST2; this interaction inhibits the antiviral effect of BST2 and this allows viral release from infected cells. Interacts with host FCN1; this interaction enhances viral entry. Interacts with host TLR4; this interaction induces cell death in T-lymphocytes or proinflammatory cytokines and SOCS1 production in monocytes. In terms of assembly, interacts with host entry receptor NPC1. GP1 and GP2delta are part of GP1,2delta soluble complexes released by ectodomain shedding. Post-translationally, the signal peptide region modulates GP's high mannose glycosylation, thereby determining the efficiency of the interactions with DC-SIGN(R). In terms of processing, N-glycosylated. Glycosylated; glycosylation is essential for the activation of dendritic cells and macrophages. Post-translationally, O-glycosylated in the mucin-like region. In terms of processing, palmitoylation is not required for its function. Specific enzymatic cleavages in vivo yield mature proteins. The precursor is processed into GP1 and GP2 by host cell furin in the trans Golgi, and maybe by other host proteases, to yield the mature GP1 and GP2 proteins. The cleavage site corresponds to the furin optimal cleavage sequence [KR]-X-[KR]-R. This cleavage does not seem to be required for function. After the internalization of the virus into cell endosomes, GP1 C-terminus is removed by the endosomal proteases cathepsin B, cathepsin L, or both, leaving a 19-kDa N-terminal fragment which is further digested by cathepsin B. This cleaved 19-kDa GP1 can then bind to the host entry receptor NPC1. Proteolytic processing of GP1,2 by host ADAM17 can remove the transmembrane anchor of GP2 and leads to shedding of complexes consisting in GP1 and truncated GP2 (GP1,2delta).

The protein localises to the virion membrane. It is found in the host cell membrane. Its subcellular location is the secreted. Its function is as follows. Trimeric GP1,2 complexes form the virion surface spikes and mediate the viral entry processes, with GP1 acting as the receptor-binding subunit and GP2 as the membrane fusion subunit. At later times of infection, down-regulates the expression of various host cell surface molecules that are essential for immune surveillance and cell adhesion. Down-modulates several integrins including ITGA1, ITGA2, ITGA3, ITGA4, ITGA5, ITGA6, ITGAV and ITGB1. This decrease in cell adhesion molecules may lead to cell detachment, contributing to the disruption of blood vessel integrity and hemorrhages developed during infection (cytotoxicity). Interacts with host TLR4 and thereby stimulates the differentiation and activation of monocytes leading to bystander death of T-lymphocytes. Down-regulates as well the function of host natural killer cells. Counteracts the antiviral effect of host BST2/tetherin that restricts release of progeny virions from infected cells. However, cooperates with VP40 and host BST2 to activate canonical NF-kappa-B pathway in a manner dependent on neddylation. In terms of biological role, functions as a decoy for anti-GP1,2 antibodies thereby contributing to viral immune evasion. Interacts and activates host macrophages and dendritic cells inducing up-regulation of cytokine transcription. This effect is mediated throught activation of host TLR4. Functionally, responsible for binding to the receptor(s) on target cells. Interacts with CD209/DC-SIGN and CLEC4M/DC-SIGNR which act as cofactors for virus entry into dendritic cells (DCs) and endothelial cells. Binding to the macrophage specific lectin CLEC10A also seems to enhance virus infectivity. Interaction with FOLR1/folate receptor alpha may be a cofactor for virus entry in some cell types, although results are contradictory. Members of the Tyro3 receptor tyrosine kinase family also seem to be cell entry factors in filovirus infection. Once attached, the virions are internalized through clathrin-dependent endocytosis and/or macropinocytosis. After internalization of the virus into the endosomes of the host cell, proteolysis of GP1 by two cysteine proteases, CTSB/cathepsin B and CTSL/cathepsin L removes the glycan cap and allows GP1 binding to the host entry receptor NPC1. NPC1-binding, Ca(2+) and acidic pH induce a conformational change of GP2, which unmasks its fusion peptide and permit membranes fusion. Acts as a class I viral fusion protein. Under the current model, the protein has at least 3 conformational states: pre-fusion native state, pre-hairpin intermediate state, and post-fusion hairpin state. During viral and target cell membrane fusion, the coiled coil regions (heptad repeats) assume a trimer-of-hairpins structure, positioning the fusion peptide in close proximity to the C-terminal region of the ectodomain. The formation of this structure appears to drive apposition and subsequent fusion of viral and target cell membranes. Responsible for penetration of the virus into the cell cytoplasm by mediating the fusion of the membrane of the endocytosed virus particle with the endosomal membrane. Low pH in endosomes induces an irreversible conformational change in GP2, releasing the fusion hydrophobic peptide. The polypeptide is Envelope glycoprotein (GP) (Epomops franqueti (Franquet's epauletted fruit bat)).